The chain runs to 73 residues: MKLTCVLIIAVLFLTACQLVTADYSGDEQQYRAMRLIDAMRNFGDTRSCGRRGKPCPCCRGFRCTGSFCRKWQ.

An N-terminal signal peptide occupies residues 1–22; the sequence is MKLTCVLIIAVLFLTACQLVTA. Positions 23–47 are excised as a propeptide; the sequence is DYSGDEQQYRAMRLIDAMRNFGDTR. 3 disulfide bridges follow: Cys-49-Cys-59, Cys-56-Cys-64, and Cys-58-Cys-69.

It belongs to the conotoxin O1 superfamily. In terms of tissue distribution, expressed by the venom duct.

The protein localises to the secreted. The sequence is that of Conotoxin Leo-O2 from Conus leopardus (Leopard cone).